The primary structure comprises 376 residues: Putative glutamate--cysteine ligase 2 (376 aa).

Belongs to the glutamate--cysteine ligase type 2 family. YbdK subfamily.

The enzyme catalyses L-cysteine + L-glutamate + ATP = gamma-L-glutamyl-L-cysteine + ADP + phosphate + H(+). In terms of biological role, ATP-dependent carboxylate-amine ligase which exhibits weak glutamate--cysteine ligase activity. The polypeptide is Putative glutamate--cysteine ligase 2 (Paracoccus denitrificans (strain Pd 1222)).